The sequence spans 282 residues: Orotidine 5'-phosphate decarboxylase (282 aa).

The Proton donor role is filled by K95.

This sequence belongs to the OMP decarboxylase family. Type 2 subfamily.

The catalysed reaction is orotidine 5'-phosphate + H(+) = UMP + CO2. It participates in pyrimidine metabolism; UMP biosynthesis via de novo pathway; UMP from orotate: step 2/2. The chain is Orotidine 5'-phosphate decarboxylase (pyrF) from Mycobacterium leprae (strain TN).